We begin with the raw amino-acid sequence, 326 residues long: Glycerol-3-phosphate dehydrogenase [NAD(P)+] (326 aa).

4 residues coordinate NADPH: Trp16, Arg36, Arg37, and Lys106. The sn-glycerol 3-phosphate site is built by Lys106 and Gly132. Ala136 serves as a coordination point for NADPH. Sn-glycerol 3-phosphate-binding residues include Lys187, Asp240, Ser250, Arg251, and Asn252. Lys187 acts as the Proton acceptor in catalysis. Arg251 contacts NADPH. NADPH contacts are provided by Val271 and Glu273.

Belongs to the NAD-dependent glycerol-3-phosphate dehydrogenase family.

Its subcellular location is the cytoplasm. The enzyme catalyses sn-glycerol 3-phosphate + NAD(+) = dihydroxyacetone phosphate + NADH + H(+). It carries out the reaction sn-glycerol 3-phosphate + NADP(+) = dihydroxyacetone phosphate + NADPH + H(+). It functions in the pathway membrane lipid metabolism; glycerophospholipid metabolism. Catalyzes the reduction of the glycolytic intermediate dihydroxyacetone phosphate (DHAP) to sn-glycerol 3-phosphate (G3P), the key precursor for phospholipid synthesis. This is Glycerol-3-phosphate dehydrogenase [NAD(P)+] from Deinococcus geothermalis (strain DSM 11300 / CIP 105573 / AG-3a).